The chain runs to 577 residues: Arginine--tRNA ligase (577 aa).

Residues 122–132 (PNVAKEMHVGH) carry the 'HIGH' region motif.

This sequence belongs to the class-I aminoacyl-tRNA synthetase family. Monomer.

It is found in the cytoplasm. The enzyme catalyses tRNA(Arg) + L-arginine + ATP = L-arginyl-tRNA(Arg) + AMP + diphosphate. This is Arginine--tRNA ligase from Klebsiella pneumoniae (strain 342).